Here is a 255-residue protein sequence, read N- to C-terminus: Octanoyltransferase (255 aa).

The BPL/LPL catalytic domain occupies 54–238 (GDAAELVWLL…AFTEIFGATV (185 aa)). Substrate-binding positions include 92-99 (RGGQLTYH), 167-169 (AIG), and 180-182 (GIA). C198 (acyl-thioester intermediate) is an active-site residue.

Belongs to the LipB family.

Its subcellular location is the cytoplasm. It catalyses the reaction octanoyl-[ACP] + L-lysyl-[protein] = N(6)-octanoyl-L-lysyl-[protein] + holo-[ACP] + H(+). Its pathway is protein modification; protein lipoylation via endogenous pathway; protein N(6)-(lipoyl)lysine from octanoyl-[acyl-carrier-protein]: step 1/2. In terms of biological role, catalyzes the transfer of endogenously produced octanoic acid from octanoyl-acyl-carrier-protein onto the lipoyl domains of lipoate-dependent enzymes. Lipoyl-ACP can also act as a substrate although octanoyl-ACP is likely to be the physiological substrate. This Rhodopseudomonas palustris (strain HaA2) protein is Octanoyltransferase.